Here is a 193-residue protein sequence, read N- to C-terminus: uncharacterized protein (193 aa).

A signal peptide spans 1–14; the sequence is MSTSLLFSLSPSSS.

This is an uncharacterized protein from Saccharomyces cerevisiae (strain ATCC 204508 / S288c) (Baker's yeast).